The following is a 229-amino-acid chain: GTP cyclohydrolase 1 (229 aa).

The interval 1-26 (MDAKIKPLRGGKPADARPEFQPAELD) is disordered. 3 residues coordinate Zn(2+): C118, H121, and C189.

Belongs to the GTP cyclohydrolase I family. In terms of assembly, toroid-shaped homodecamer, composed of two pentamers of five dimers.

It catalyses the reaction GTP + H2O = 7,8-dihydroneopterin 3'-triphosphate + formate + H(+). It functions in the pathway cofactor biosynthesis; 7,8-dihydroneopterin triphosphate biosynthesis; 7,8-dihydroneopterin triphosphate from GTP: step 1/1. This chain is GTP cyclohydrolase 1, found in Rhodopseudomonas palustris (strain BisB5).